Consider the following 131-residue polypeptide: Large-conductance mechanosensitive channel (131 aa).

Transmembrane regions (helical) follow at residues 14-34 (IMDLAIGVVIGGAFGKIVTSL), 38-58 (IIMPLVGLLLGGLDFSGLAVT), and 67-87 (GSFIQTIVNFFIISFSIFIVI).

It belongs to the MscL family. In terms of assembly, homopentamer.

The protein localises to the cell membrane. Functionally, channel that opens in response to stretch forces in the membrane lipid bilayer. May participate in the regulation of osmotic pressure changes within the cell. This Bacillus velezensis (strain DSM 23117 / BGSC 10A6 / LMG 26770 / FZB42) (Bacillus amyloliquefaciens subsp. plantarum) protein is Large-conductance mechanosensitive channel.